A 474-amino-acid chain; its full sequence is Bifunctional protein HldE (474 aa).

Positions 1–318 are ribokinase; it reads MKLSMPRFDQ…RAIQREEGSE (318 aa). 194–197 lines the ATP pocket; sequence NLSE. D263 is an active-site residue. The cytidylyltransferase stretch occupies residues 343–474; sequence FTNGCFDILH…AIVEKIRGQG (132 aa).

In the N-terminal section; belongs to the carbohydrate kinase PfkB family. The protein in the C-terminal section; belongs to the cytidylyltransferase family. As to quaternary structure, homodimer.

The catalysed reaction is D-glycero-beta-D-manno-heptose 7-phosphate + ATP = D-glycero-beta-D-manno-heptose 1,7-bisphosphate + ADP + H(+). It catalyses the reaction D-glycero-beta-D-manno-heptose 1-phosphate + ATP + H(+) = ADP-D-glycero-beta-D-manno-heptose + diphosphate. Its pathway is nucleotide-sugar biosynthesis; ADP-L-glycero-beta-D-manno-heptose biosynthesis; ADP-L-glycero-beta-D-manno-heptose from D-glycero-beta-D-manno-heptose 7-phosphate: step 1/4. The protein operates within nucleotide-sugar biosynthesis; ADP-L-glycero-beta-D-manno-heptose biosynthesis; ADP-L-glycero-beta-D-manno-heptose from D-glycero-beta-D-manno-heptose 7-phosphate: step 3/4. Its function is as follows. Catalyzes the phosphorylation of D-glycero-D-manno-heptose 7-phosphate at the C-1 position to selectively form D-glycero-beta-D-manno-heptose-1,7-bisphosphate. In terms of biological role, catalyzes the ADP transfer from ATP to D-glycero-beta-D-manno-heptose 1-phosphate, yielding ADP-D-glycero-beta-D-manno-heptose. This is Bifunctional protein HldE from Pseudomonas syringae pv. syringae (strain B728a).